Here is a 456-residue protein sequence, read N- to C-terminus: MRYTVFKACKELVAAAVLLSGTVLTGQAALSETLTGALVKAYKNNAPLNSSRAGVRIQDENVAIAKSAYRPQITGSYNISRGKTPATDYRTTGTVGIQLNQMLFDGFQTRNNVAAAETQVFAQRENLRNDEQNTLYQAVAAYMDVYQLRQIAALREKNLAAMNEQVRAARARLDVGEGTRTDVAQAEASRSTAIAALNAARADVKTAEATYMQVVGSLPDKLTPASAARHLPQSPSQAYASALASHPGILATKYAVNAAGYNVKAKEGALLPTIGLTASASQLDTIAGTDMGDGNTASIGVGVNIPIYTGGRTSAQIRQSKEQLGQARIEVDVVQDKVRQAISSAWSQLEAARASVAANRDGIAAAQLALDGVIEERKVGQRTTLDVLNAQNDLVAVQIALVQAEHDVVVASYALLNATGRMTADQLGLQVAQYKPEEHYKAVKDKWFGLRTPDGR.

An N-terminal signal peptide occupies residues 1–28 (MRYTVFKACKELVAAAVLLSGTVLTGQA). Positions 312-341 (RTSAQIRQSKEQLGQARIEVDVVQDKVRQA) form a coiled coil.

The protein belongs to the outer membrane factor (OMF) (TC 1.B.17) family. In terms of assembly, probably part of a tripartite efflux pump, which is composed of an outer membrane efflux protein, an inner membrane protein and a protein that expands the periplasmic space. Could form a tripartite pump with BepD and BepE or with BepF and BepG.

The protein localises to the cell outer membrane. Involved in the efflux of toxic and relatively hydrophobic compounds. Influences survival inside the host. This Brucella suis biovar 1 (strain 1330) protein is Outer membrane efflux protein BepC (bepC).